A 94-amino-acid polypeptide reads, in one-letter code: Phosphoribosyl-ATP pyrophosphatase (94 aa).

The protein belongs to the PRA-PH family.

It localises to the cytoplasm. It catalyses the reaction 1-(5-phospho-beta-D-ribosyl)-ATP + H2O = 1-(5-phospho-beta-D-ribosyl)-5'-AMP + diphosphate + H(+). It functions in the pathway amino-acid biosynthesis; L-histidine biosynthesis; L-histidine from 5-phospho-alpha-D-ribose 1-diphosphate: step 2/9. The chain is Phosphoribosyl-ATP pyrophosphatase (hisE) from Pyrobaculum aerophilum (strain ATCC 51768 / DSM 7523 / JCM 9630 / CIP 104966 / NBRC 100827 / IM2).